The chain runs to 358 residues: Magnesium-protoporphyrin IX monomethyl ester [oxidative] cyclase (358 aa).

The protein belongs to the AcsF family. Requires Fe cation as cofactor.

The catalysed reaction is Mg-protoporphyrin IX 13-monomethyl ester + 3 NADPH + 3 O2 + 2 H(+) = 3,8-divinyl protochlorophyllide a + 3 NADP(+) + 5 H2O. The protein operates within porphyrin-containing compound metabolism; chlorophyll biosynthesis (light-independent). Catalyzes the formation of the isocyclic ring in chlorophyll biosynthesis. Mediates the cyclase reaction, which results in the formation of divinylprotochlorophyllide (Pchlide) characteristic of all chlorophylls from magnesium-protoporphyrin IX 13-monomethyl ester (MgPMME). This Trichodesmium erythraeum (strain IMS101) protein is Magnesium-protoporphyrin IX monomethyl ester [oxidative] cyclase.